The sequence spans 406 residues: Argininosuccinate synthase (406 aa).

ATP is bound by residues 12–20 (AYSGGLDTS) and Ala-39. L-citrulline contacts are provided by Tyr-90 and Ser-95. Gly-120 is a binding site for ATP. Positions 122, 126, and 127 each coordinate L-aspartate. Position 126 (Asn-126) interacts with L-citrulline. 5 residues coordinate L-citrulline: Arg-130, Ser-179, Ser-188, Glu-264, and Tyr-276.

The protein belongs to the argininosuccinate synthase family. Type 1 subfamily. As to quaternary structure, homotetramer.

Its subcellular location is the cytoplasm. It carries out the reaction L-citrulline + L-aspartate + ATP = 2-(N(omega)-L-arginino)succinate + AMP + diphosphate + H(+). Its pathway is amino-acid biosynthesis; L-arginine biosynthesis; L-arginine from L-ornithine and carbamoyl phosphate: step 2/3. The chain is Argininosuccinate synthase from Geobacter sp. (strain M21).